Reading from the N-terminus, the 328-residue chain is MIDFGNFYQQIAKGPLSHWLNTLPSQLSSWQQESLHGKFKLWFNSLEHLPSLTPTTLDLNDSVTARMEPDISEGQREGIEKLLRNLMPWRKGPFSLYGVDINTEWRSDWKWQRVLPHISPLKNRLILDVGCGSGYHLWRMVGEGAMMAVGIDPMQLFLCQFEAVRKLLGDDQRAHVLPLGIEQLPELAAFDTVFSMGVLYHRRSPLDHLWQLKNQLVAGGELVLETLVIEGDENQVLVPGERYAQMRNVYFIPSAAALTTWLEKCGFVDVRVVDVCTTTTQEQRRTDWMITESLAEFLDPEDPSKTVEGYPAPVRAVLVARKPGIYQP.

Residues K91, W105, K110, G130, 181–182 (IE), M196, Y200, and R315 contribute to the carboxy-S-adenosyl-L-methionine site.

This sequence belongs to the class I-like SAM-binding methyltransferase superfamily. CmoB family. As to quaternary structure, homotetramer.

It carries out the reaction carboxy-S-adenosyl-L-methionine + 5-hydroxyuridine(34) in tRNA = 5-carboxymethoxyuridine(34) in tRNA + S-adenosyl-L-homocysteine + H(+). Its function is as follows. Catalyzes carboxymethyl transfer from carboxy-S-adenosyl-L-methionine (Cx-SAM) to 5-hydroxyuridine (ho5U) to form 5-carboxymethoxyuridine (cmo5U) at position 34 in tRNAs. The protein is tRNA U34 carboxymethyltransferase of Pectobacterium carotovorum subsp. carotovorum (strain PC1).